The sequence spans 367 residues: DNA replication and repair protein RecF (367 aa).

An ATP-binding site is contributed by glycine 30–threonine 37.

Belongs to the RecF family.

The protein localises to the cytoplasm. In terms of biological role, the RecF protein is involved in DNA metabolism; it is required for DNA replication and normal SOS inducibility. RecF binds preferentially to single-stranded, linear DNA. It also seems to bind ATP. The protein is DNA replication and repair protein RecF of Pseudomonas syringae pv. syringae (strain B728a).